Reading from the N-terminus, the 393-residue chain is Formate-dependent phosphoribosylglycinamide formyltransferase (393 aa).

N(1)-(5-phospho-beta-D-ribosyl)glycinamide contacts are provided by residues 22–23 and Glu-82; that span reads EL. Residues Arg-114, Lys-155, 160–165, 195–198, and Glu-203 each bind ATP; these read SSGHGQ and EGFI. Residues 119 to 308 enclose the ATP-grasp domain; the sequence is RLAAEELGLK…QFALHARAIL (190 aa). Glu-267 and Glu-279 together coordinate Mg(2+). Residues Asp-286, Lys-356, and 363 to 364 each bind N(1)-(5-phospho-beta-D-ribosyl)glycinamide; that span reads RR.

It belongs to the PurK/PurT family. In terms of assembly, homodimer.

It carries out the reaction N(1)-(5-phospho-beta-D-ribosyl)glycinamide + formate + ATP = N(2)-formyl-N(1)-(5-phospho-beta-D-ribosyl)glycinamide + ADP + phosphate + H(+). The protein operates within purine metabolism; IMP biosynthesis via de novo pathway; N(2)-formyl-N(1)-(5-phospho-D-ribosyl)glycinamide from N(1)-(5-phospho-D-ribosyl)glycinamide (formate route): step 1/1. Functionally, involved in the de novo purine biosynthesis. Catalyzes the transfer of formate to 5-phospho-ribosyl-glycinamide (GAR), producing 5-phospho-ribosyl-N-formylglycinamide (FGAR). Formate is provided by PurU via hydrolysis of 10-formyl-tetrahydrofolate. This chain is Formate-dependent phosphoribosylglycinamide formyltransferase, found in Actinobacillus pleuropneumoniae serotype 3 (strain JL03).